Here is a 178-residue protein sequence, read N- to C-terminus: ATP-dependent protease subunit HslV (178 aa).

Thr2 is a catalytic residue. Na(+)-binding residues include Ser159, Cys162, and Thr165.

The protein belongs to the peptidase T1B family. HslV subfamily. As to quaternary structure, a double ring-shaped homohexamer of HslV is capped on each side by a ring-shaped HslU homohexamer. The assembly of the HslU/HslV complex is dependent on binding of ATP.

The protein resides in the cytoplasm. It carries out the reaction ATP-dependent cleavage of peptide bonds with broad specificity.. With respect to regulation, allosterically activated by HslU binding. Functionally, protease subunit of a proteasome-like degradation complex believed to be a general protein degrading machinery. The polypeptide is ATP-dependent protease subunit HslV (Buchnera aphidicola subsp. Cinara cedri (strain Cc)).